A 540-amino-acid polypeptide reads, in one-letter code: Transcription termination/antitermination protein NusA (540 aa).

The region spanning 144–214 is the S1 motif domain; that stretch reads GQVIEARVED…SMWPITLSRS (71 aa). In terms of domain architecture, KH spans 319–386; it reads DTSIEIVVPA…QGIFGIKKRR (68 aa). The disordered stretch occupies residues 457–540; sequence VAAPTPTPAP…KQTFDNFDDL (84 aa). Positions 461 to 489 are enriched in pro residues; that stretch reads TPTPAPQPTPAPTKVEPVPPPVSVTPKPI. The segment covering 512-522 has biased composition (basic and acidic residues); sequence DDSKTKPEKSS. Residues 523-540 are compositionally biased toward polar residues; it reads AKTNTPQTKQTFDNFDDL.

It belongs to the NusA family. In terms of assembly, monomer. Binds directly to the core enzyme of the DNA-dependent RNA polymerase and to nascent RNA.

It localises to the cytoplasm. Participates in both transcription termination and antitermination. The chain is Transcription termination/antitermination protein NusA from Mycoplasma pneumoniae (strain ATCC 29342 / M129 / Subtype 1) (Mycoplasmoides pneumoniae).